We begin with the raw amino-acid sequence, 103 residues long: MDPGTTGIVGGVSEAKPATPEIQEVADKVKRQLEEKTNEKYEKFKVVEYKSQVVAGQILFMKVDVGNGRFLHMKVLRGLSGDDDLKLLDYQTNKTKNDELTDF.

The residue at position 1 (Met1) is an N-acetylmethionine. The short motif at 52–56 (QVVAG) is the Secondary area of contact element.

Belongs to the cystatin family.

The protein resides in the cytoplasm. Its function is as follows. This is an intracellular thiol proteinase inhibitor. This Rattus norvegicus (Rat) protein is Cystatin-A (Csta).